A 304-amino-acid polypeptide reads, in one-letter code: Protein Largen (304 aa).

A compositionally biased stretch (polar residues) spans 1–13 (MSAKSKGNPSSSC). 4 disordered regions span residues 1–27 (MSAKSKGNPSSSCPAEGPPAASKTKVK), 66–91 (QLEDEMTDSSKTDTLNSSSSGTTASS), 114–160 (LTVL…GGLP), and 239–304 (HPPG…TTTV). Residues 33 to 70 (IVEDLELVLGDLKDVAKELKEVVDQIDTLTSDLQLEDE) adopt a coiled-coil conformation. Residues 77-91 (TDTLNSSSSGTTASS) show a composition bias toward low complexity. 3 stretches are compositionally biased toward pro residues: residues 120 to 129 (PNPPPPPPRL), 239 to 261 (HPPGKIPHQGPPLPPTPHLPPFP), and 277 to 289 (PIRPATVPPPTAP).

In terms of biological role, regulator of cell size that promotes cell size increase independently of mTOR and Hippo signaling pathways. Acts by stimulating the translation of specific mRNAs, including those encoding proteins affecting mitochondrial functions. Increases mitochondrial mass and respiration. The polypeptide is Protein Largen (PRR16) (Homo sapiens (Human)).